A 64-amino-acid polypeptide reads, in one-letter code: Large ribosomal subunit protein bL35 (64 aa).

Composition is skewed to basic residues over residues 1-26 and 33-44; these read MPKM…KRSK and LTKKSPKRKRKL. Positions 1–44 are disordered; sequence MPKMKTHRGAAKRFKKTGTGKIKRSKAYTSHILTKKSPKRKRKL.

This sequence belongs to the bacterial ribosomal protein bL35 family.

This is Large ribosomal subunit protein bL35 from Alkaliphilus oremlandii (strain OhILAs) (Clostridium oremlandii (strain OhILAs)).